A 381-amino-acid chain; its full sequence is Na(+)/H(+) antiporter NhaA 1 (381 aa).

11 consecutive transmembrane segments (helical) span residues glycine 18–alanine 38, isoleucine 53–leucine 73, serine 89–leucine 109, glycine 118–glycine 138, valine 147–phenylalanine 167, threonine 170–leucine 190, tyrosine 210–isoleucine 230, proline 251–serine 271, phenylalanine 283–isoleucine 303, isoleucine 321–leucine 341, and isoleucine 348–phenylalanine 368.

This sequence belongs to the NhaA Na(+)/H(+) (TC 2.A.33) antiporter family.

The protein localises to the cell inner membrane. The catalysed reaction is Na(+)(in) + 2 H(+)(out) = Na(+)(out) + 2 H(+)(in). Functionally, na(+)/H(+) antiporter that extrudes sodium in exchange for external protons. This Flavobacterium johnsoniae (strain ATCC 17061 / DSM 2064 / JCM 8514 / BCRC 14874 / CCUG 350202 / NBRC 14942 / NCIMB 11054 / UW101) (Cytophaga johnsonae) protein is Na(+)/H(+) antiporter NhaA 1.